Reading from the N-terminus, the 280-residue chain is L-aspartate dehydrogenase (280 aa).

Residues A134 and N202 each contribute to the NAD(+) site. H232 is a catalytic residue.

This sequence belongs to the L-aspartate dehydrogenase family.

The enzyme catalyses L-aspartate + NADP(+) + H2O = oxaloacetate + NH4(+) + NADPH + H(+). It catalyses the reaction L-aspartate + NAD(+) + H2O = oxaloacetate + NH4(+) + NADH + H(+). It participates in cofactor biosynthesis; NAD(+) biosynthesis; iminoaspartate from L-aspartate (dehydrogenase route): step 1/1. Functionally, specifically catalyzes the NAD or NADP-dependent dehydrogenation of L-aspartate to iminoaspartate. In Bradyrhizobium diazoefficiens (strain JCM 10833 / BCRC 13528 / IAM 13628 / NBRC 14792 / USDA 110), this protein is L-aspartate dehydrogenase.